A 138-amino-acid polypeptide reads, in one-letter code: Small ribosomal subunit protein uS12 (138 aa).

Residues 1 to 22 show a composition bias toward polar residues; sequence MPTINQLVRQGRKSISTKSDSP. A disordered region spans residues 1–45; that stretch reads MPTINQLVRQGRKSISTKSDSPALNFGYNSKKKSLTNNPAPQKRG. Position 102 is a 3-methylthioaspartic acid (Asp-102).

The protein belongs to the universal ribosomal protein uS12 family. In terms of assembly, part of the 30S ribosomal subunit. Contacts proteins S8 and S17. May interact with IF1 in the 30S initiation complex.

Functionally, with S4 and S5 plays an important role in translational accuracy. Its function is as follows. Interacts with and stabilizes bases of the 16S rRNA that are involved in tRNA selection in the A site and with the mRNA backbone. Located at the interface of the 30S and 50S subunits, it traverses the body of the 30S subunit contacting proteins on the other side and probably holding the rRNA structure together. The combined cluster of proteins S8, S12 and S17 appears to hold together the shoulder and platform of the 30S subunit. The polypeptide is Small ribosomal subunit protein uS12 (Lacticaseibacillus paracasei (strain ATCC 334 / BCRC 17002 / CCUG 31169 / CIP 107868 / KCTC 3260 / NRRL B-441) (Lactobacillus paracasei)).